Consider the following 185-residue polypeptide: Photosystem I assembly protein Ycf4 (185 aa).

Helical transmembrane passes span phenylalanine 22–serine 42, isoleucine 57–serine 77, and phenylalanine 101–proline 121.

This sequence belongs to the Ycf4 family.

Its subcellular location is the plastid. The protein resides in the chloroplast thylakoid membrane. Its function is as follows. Seems to be required for the assembly of the photosystem I complex. This is Photosystem I assembly protein Ycf4 from Gnetum parvifolium (Small-leaved jointfir).